Here is a 255-residue protein sequence, read N- to C-terminus: MSELIVSRQQRVLLLTLNRPAARNALNNALLMQLVNELEAAATDTSISVCVITGNARFFAAGADLNEMAEKDLAATLNDTRPQLWARLQAFNKPLIAAVNGYALGAGCELALLCDVVVAGENARFGLPEITLGIMPGAGGTQRLIRSVGKSLASKMVLSGESITAQQAQQAGLVSDVFPSDLTLEYALQLASKMARHSPLALQAAKQALRQSQEVALQAGLAQERQLFTLLAATEDRHEGISAFLQKRTPDFKGR.

Belongs to the enoyl-CoA hydratase/isomerase family.

It carries out the reaction a (3S)-3-hydroxyacyl-CoA = a (2E)-enoyl-CoA + H2O. The enzyme catalyses a 4-saturated-(3S)-3-hydroxyacyl-CoA = a (3E)-enoyl-CoA + H2O. It participates in aromatic compound metabolism; phenylacetate degradation. Functionally, catalyzes the reversible conversion of enzymatically produced 2,3-dehydroadipyl-CoA into 3-hydroxyadipyl-CoA. This chain is 2,3-dehydroadipyl-CoA hydratase (paaF), found in Escherichia coli (strain K12).